A 255-amino-acid chain; its full sequence is tRNA (guanine-N(1)-)-methyltransferase (255 aa).

S-adenosyl-L-methionine contacts are provided by residues Gly113 and 133–138 (IGDYVL).

Belongs to the RNA methyltransferase TrmD family. In terms of assembly, homodimer.

Its subcellular location is the cytoplasm. It catalyses the reaction guanosine(37) in tRNA + S-adenosyl-L-methionine = N(1)-methylguanosine(37) in tRNA + S-adenosyl-L-homocysteine + H(+). Specifically methylates guanosine-37 in various tRNAs. The polypeptide is tRNA (guanine-N(1)-)-methyltransferase (Salmonella agona (strain SL483)).